We begin with the raw amino-acid sequence, 189 residues long: Thymidine kinase (189 aa).

ATP is bound by residues 9–16 and 85–88; these read GTMNSGKT and DESQ. Residue Glu86 is the Proton acceptor of the active site. Zn(2+)-binding residues include Cys143, Cys146, Cys180, and His183.

This sequence belongs to the thymidine kinase family. Homotetramer.

Its subcellular location is the cytoplasm. The catalysed reaction is thymidine + ATP = dTMP + ADP + H(+). This chain is Thymidine kinase, found in Streptococcus pyogenes serotype M1.